Reading from the N-terminus, the 211-residue chain is Shikimate kinase (211 aa).

The segment at 1-22 (MHFRYNYRMQRSKTPNTKNSDT) is disordered. Positions 12-22 (SKTPNTKNSDT) are enriched in polar residues. Residue 36-41 (GSGKTT) participates in ATP binding. Thr40 contributes to the Mg(2+) binding site. 3 residues coordinate substrate: Asp58, Arg82, and Gly104. Position 142 (Arg142) interacts with ATP. Arg161 provides a ligand contact to substrate. An ATP-binding site is contributed by Gln178.

It belongs to the shikimate kinase family. In terms of assembly, monomer. Requires Mg(2+) as cofactor.

It is found in the cytoplasm. It catalyses the reaction shikimate + ATP = 3-phosphoshikimate + ADP + H(+). It functions in the pathway metabolic intermediate biosynthesis; chorismate biosynthesis; chorismate from D-erythrose 4-phosphate and phosphoenolpyruvate: step 5/7. Functionally, catalyzes the specific phosphorylation of the 3-hydroxyl group of shikimic acid using ATP as a cosubstrate. The sequence is that of Shikimate kinase from Nitrosomonas europaea (strain ATCC 19718 / CIP 103999 / KCTC 2705 / NBRC 14298).